A 461-amino-acid polypeptide reads, in one-letter code: MEEKKKELEELKYQSGFGNHFSSEAIAGALPLDQNSPLLCPYGLYAEQISGTSFTSPRKLNQRSWLYRVKPSVTHEPFKPRVPAHKKLVSEFDASNSRTNPTQLRWRPEDIPDSEIDFVDGLFTICGAGSSFLRHGFAIHMYVANTGMKDSAFCNADGDFLLVPQTGRLWIETECGRLLVTPGEIAVIPQGFRFSIDLPDGKSRGYVAEIYGAHFQLPDLGPIGANGLAASRDFLAPTAWFEDGLRPEYTIVQKFGGELFTAKQDFSPFNVVAWHGNYVPYKYDLKKFCPYNTVLLDHGDPSINTVLTAPTDKPGVALLDFVIFPPRWLVAEHTFRPPYYHRNCMSEFMGLIYGAYEAKADGFLPGGASLHSCMTPHGPDTTTYEATIARVNAMAPSKLTGTMAFMFESALIPRVCHWALESPFLDHDYYQCWIGLKSHFSRISLDKTNVESTEKEPGASE.

Fe cation contacts are provided by H341, E347, and H377.

The protein belongs to the homogentisate dioxygenase family. Requires Fe cation as cofactor.

It catalyses the reaction homogentisate + O2 = 4-maleylacetoacetate + H(+). It functions in the pathway amino-acid degradation; L-phenylalanine degradation; acetoacetate and fumarate from L-phenylalanine: step 4/6. This is Homogentisate 1,2-dioxygenase (HGO) from Arabidopsis thaliana (Mouse-ear cress).